The sequence spans 429 residues: Ribosomal RNA small subunit methyltransferase B (429 aa).

S-adenosyl-L-methionine contacts are provided by residues 254-260 (CAAPGGK), aspartate 277, aspartate 303, and aspartate 322. The active-site Nucleophile is cysteine 375.

This sequence belongs to the class I-like SAM-binding methyltransferase superfamily. RsmB/NOP family.

The protein localises to the cytoplasm. It carries out the reaction cytidine(967) in 16S rRNA + S-adenosyl-L-methionine = 5-methylcytidine(967) in 16S rRNA + S-adenosyl-L-homocysteine + H(+). Functionally, specifically methylates the cytosine at position 967 (m5C967) of 16S rRNA. This is Ribosomal RNA small subunit methyltransferase B from Escherichia coli O17:K52:H18 (strain UMN026 / ExPEC).